The primary structure comprises 267 residues: Tryptophan synthase alpha chain (267 aa).

Catalysis depends on proton acceptor residues E49 and D60.

This sequence belongs to the TrpA family. As to quaternary structure, tetramer of two alpha and two beta chains.

The enzyme catalyses (1S,2R)-1-C-(indol-3-yl)glycerol 3-phosphate + L-serine = D-glyceraldehyde 3-phosphate + L-tryptophan + H2O. It participates in amino-acid biosynthesis; L-tryptophan biosynthesis; L-tryptophan from chorismate: step 5/5. In terms of biological role, the alpha subunit is responsible for the aldol cleavage of indoleglycerol phosphate to indole and glyceraldehyde 3-phosphate. The sequence is that of Tryptophan synthase alpha chain from Citrifermentans bemidjiense (strain ATCC BAA-1014 / DSM 16622 / JCM 12645 / Bem) (Geobacter bemidjiensis).